The chain runs to 505 residues: Deoxyguanosinetriphosphate triphosphohydrolase (505 aa).

The 208-residue stretch at 66–273 folds into the HD domain; sequence RLTHSMEVQQ…MEAADDISYC (208 aa).

It belongs to the dGTPase family. Type 1 subfamily. In terms of assembly, homotetramer. The cofactor is Mg(2+).

It carries out the reaction dGTP + H2O = 2'-deoxyguanosine + triphosphate + H(+). Functionally, dGTPase preferentially hydrolyzes dGTP over the other canonical NTPs. The protein is Deoxyguanosinetriphosphate triphosphohydrolase of Salmonella arizonae (strain ATCC BAA-731 / CDC346-86 / RSK2980).